We begin with the raw amino-acid sequence, 416 residues long: Glutamyl-tRNA reductase (416 aa).

Substrate-binding positions include 49 to 52 (TCNR), S105, 110 to 112 (EPQ), and Q116. Catalysis depends on C50, which acts as the Nucleophile. Position 185–190 (185–190 (GAGETI)) interacts with NADP(+).

It belongs to the glutamyl-tRNA reductase family. In terms of assembly, homodimer.

It carries out the reaction (S)-4-amino-5-oxopentanoate + tRNA(Glu) + NADP(+) = L-glutamyl-tRNA(Glu) + NADPH + H(+). It functions in the pathway porphyrin-containing compound metabolism; protoporphyrin-IX biosynthesis; 5-aminolevulinate from L-glutamyl-tRNA(Glu): step 1/2. Catalyzes the NADPH-dependent reduction of glutamyl-tRNA(Glu) to glutamate 1-semialdehyde (GSA). This Shewanella baltica (strain OS223) protein is Glutamyl-tRNA reductase.